A 232-amino-acid polypeptide reads, in one-letter code: Thiamine import ATP-binding protein ThiQ (232 aa).

The ABC transporter domain maps to 2–230 (LKLTDITWLY…KGSASAIWGI (229 aa)). 32 to 39 (GPSGAGKS) is an ATP binding site.

This sequence belongs to the ABC transporter superfamily. Thiamine importer (TC 3.A.1.19.1) family. The complex is composed of two ATP-binding proteins (ThiQ), two transmembrane proteins (ThiP) and a solute-binding protein (ThiB).

The protein localises to the cell inner membrane. The enzyme catalyses thiamine(out) + ATP + H2O = thiamine(in) + ADP + phosphate + H(+). Its function is as follows. Part of the ABC transporter complex ThiBPQ involved in thiamine import. Responsible for energy coupling to the transport system. The chain is Thiamine import ATP-binding protein ThiQ from Shigella flexneri.